The sequence spans 332 residues: L-lactate dehydrogenase A chain (332 aa).

NAD(+)-binding positions include 29-57 (GAVGMACAISILMKDLADELTLVDVVEDK) and R99. Substrate-binding residues include R106, N138, and R169. Residue N138 coordinates NAD(+). The Proton acceptor role is filled by H193. A substrate-binding site is contributed by T248.

It belongs to the LDH/MDH superfamily. LDH family. In terms of assembly, homotetramer.

The protein resides in the cytoplasm. It catalyses the reaction (S)-lactate + NAD(+) = pyruvate + NADH + H(+). It participates in fermentation; pyruvate fermentation to lactate; (S)-lactate from pyruvate: step 1/1. Its function is as follows. Interconverts simultaneously and stereospecifically pyruvate and lactate with concomitant interconversion of NADH and NAD(+). The protein is L-lactate dehydrogenase A chain (LDHA) of Gallus gallus (Chicken).